We begin with the raw amino-acid sequence, 273 residues long: Large ribosomal subunit protein uL2c (273 aa).

The segment at 223–273 (MNPVDHPHGGGEGRAPIGRKKPTTPWGYPALGRRSRKRNKYSDSFILRRRK) is disordered.

Belongs to the universal ribosomal protein uL2 family. As to quaternary structure, part of the 50S ribosomal subunit.

The protein resides in the plastid. It is found in the chloroplast. The protein is Large ribosomal subunit protein uL2c (rpl2) of Calycanthus floridus var. glaucus (Eastern sweetshrub).